The chain runs to 140 residues: Low calcium response locus protein T (140 aa).

The polypeptide is Low calcium response locus protein T (lcrT) (Yersinia pestis).